The chain runs to 522 residues: Sensory neuron membrane protein 1 (522 aa).

Topologically, residues 1-11 (MKLPKHLKFAA) are cytoplasmic. Residues 12–32 (GAGGAFLFGILFGWVMFPAIL) form a helical membrane-spanning segment. Topologically, residues 33 to 455 (KGQLKKEMAL…KFQLFYPKKA (423 aa)) are extracellular. 2 N-linked (GlcNAc...) asparagine glycosylation sites follow: Asn67 and Asn229. Disulfide bonds link Cys268–Cys333, Cys297–Cys350, and Cys335–Cys339. N-linked (GlcNAc...) asparagine glycosylation is present at Asn438. The helical transmembrane segment at 456–476 (VGVIKWLLVTFGGFGLIGCTI) threads the bilayer. Residues 477–522 (YHYKDRIMSFASSPGSAAVTKVKPEEVEQKDVSVIGQPQEPAKINM) are Cytoplasmic-facing.

The protein belongs to the CD36 family.

The protein localises to the cell membrane. Plays an olfactory role that is not restricted to pheromone sensitivity. The protein is Sensory neuron membrane protein 1 of Plutella xylostella (Diamondback moth).